We begin with the raw amino-acid sequence, 409 residues long: Arginine deiminase (409 aa).

The active-site Amidino-cysteine intermediate is Cys399.

It belongs to the arginine deiminase family.

Its subcellular location is the cytoplasm. The catalysed reaction is L-arginine + H2O = L-citrulline + NH4(+). It functions in the pathway amino-acid degradation; L-arginine degradation via ADI pathway; carbamoyl phosphate from L-arginine: step 1/2. The protein is Arginine deiminase of Streptococcus sanguinis (strain SK36).